Consider the following 552-residue polypeptide: 4-coumarate--CoA ligase-like 4 (552 aa).

The segment at 182–205 is disordered; that stretch reads ISATTPDPARRKDRVTQDDPATLL. Residues 189–198 are compositionally biased toward basic and acidic residues; it reads PARRKDRVTQ. ATP contacts are provided by S207, S208, G209, T210, T211, and K215. Residue Y256 participates in (E)-4-coumaroyl-AMP binding. A CoA-binding site is contributed by K277. The segment at 279–346 is SBD1; that stretch reads ELPEMLRSIN…EKYPQVEILQ (68 aa). G324, Q346, G347, and T351 together coordinate (E)-4-coumaroyl-AMP. The ATP site is built by Q346, G347, T351, D432, and R447. The tract at residues 347–411 is SBD2; the sequence is GYGLTESTAI…IRGPYVMKGY (65 aa). The (E)-4-coumaroyl-AMP site is built by K449 and K453. K455 and G456 together coordinate CoA. K538 is a binding site for ATP.

This sequence belongs to the ATP-dependent AMP-binding enzyme family. Mg(2+) serves as cofactor.

It catalyses the reaction (E)-4-coumarate + ATP + CoA = (E)-4-coumaroyl-CoA + AMP + diphosphate. It carries out the reaction (E)-4-coumarate + ATP + H(+) = (E)-4-coumaroyl-AMP + diphosphate. The catalysed reaction is (E)-4-coumaroyl-AMP + CoA = (E)-4-coumaroyl-CoA + AMP + H(+). In terms of biological role, carboxylate--CoA ligase that may use 4-coumarate as substrate. Follows a two-step reaction mechanism, wherein the carboxylate substrate first undergoes adenylation by ATP, followed by a thioesterification in the presence of CoA to yield the final CoA thioester. The polypeptide is 4-coumarate--CoA ligase-like 4 (4CLL4) (Oryza sativa subsp. japonica (Rice)).